Here is a 148-residue protein sequence, read N- to C-terminus: Transcriptional regulator MraZ (148 aa).

2 consecutive SpoVT-AbrB domains span residues 5–51 (STQL…PQPV) and 80–123 (ASDV…DMAK).

This sequence belongs to the MraZ family. In terms of assembly, forms oligomers.

It localises to the cytoplasm. Its subcellular location is the nucleoid. The polypeptide is Transcriptional regulator MraZ (Nitrosomonas europaea (strain ATCC 19718 / CIP 103999 / KCTC 2705 / NBRC 14298)).